Here is a 225-residue protein sequence, read N- to C-terminus: UPF0758 protein Bpet3149 (225 aa).

Residues 103–225 (AMSEPGSVKR…VVSMAELGLL (123 aa)) form the MPN domain. The Zn(2+) site is built by His174, His176, and Asp187. The JAMM motif motif lies at 174 to 187 (HNHPSGSAQPSQAD).

The protein belongs to the UPF0758 family.

In Bordetella petrii (strain ATCC BAA-461 / DSM 12804 / CCUG 43448), this protein is UPF0758 protein Bpet3149.